The primary structure comprises 247 residues: 14-3-3 protein gamma-A (247 aa).

This sequence belongs to the 14-3-3 family. As to quaternary structure, homodimer, and heterodimer with other family members.

Its subcellular location is the cytoplasm. Adapter protein implicated in the regulation of a large spectrum of both general and specialized signaling pathways. Binds to a large number of partners, usually by recognition of a phosphoserine or phosphothreonine motif. Binding generally results in the modulation of the activity of the binding partner. In Xenopus laevis (African clawed frog), this protein is 14-3-3 protein gamma-A (ywhag-a).